A 230-amino-acid chain; its full sequence is 6-carboxyhexanoate--CoA ligase (230 aa).

Belongs to the BioW family. Homodimer. The cofactor is Mg(2+).

It catalyses the reaction heptanedioate + ATP + CoA = 6-carboxyhexanoyl-CoA + AMP + diphosphate. The protein operates within metabolic intermediate metabolism; pimeloyl-CoA biosynthesis; pimeloyl-CoA from pimelate: step 1/1. Functionally, catalyzes the transformation of pimelate into pimeloyl-CoA with concomitant hydrolysis of ATP to AMP. The chain is 6-carboxyhexanoate--CoA ligase from Staphylococcus aureus (strain MSSA476).